Here is a 365-residue protein sequence, read N- to C-terminus: S-adenosylmethionine:tRNA ribosyltransferase-isomerase (365 aa).

The protein belongs to the QueA family. As to quaternary structure, monomer.

The protein resides in the cytoplasm. The enzyme catalyses 7-aminomethyl-7-carbaguanosine(34) in tRNA + S-adenosyl-L-methionine = epoxyqueuosine(34) in tRNA + adenine + L-methionine + 2 H(+). It functions in the pathway tRNA modification; tRNA-queuosine biosynthesis. Transfers and isomerizes the ribose moiety from AdoMet to the 7-aminomethyl group of 7-deazaguanine (preQ1-tRNA) to give epoxyqueuosine (oQ-tRNA). In Prochlorococcus marinus (strain NATL2A), this protein is S-adenosylmethionine:tRNA ribosyltransferase-isomerase.